The following is a 633-amino-acid chain: NBPF family member NBPF3 (633 aa).

Residues 15 to 52 (RGPDVETSPFGAPRAASHGVGRHQELRDPTVPGPTSSA) are disordered. Residues 127–186 (LRDERLLTEEKLAEELGQAEELRQYKVLVHSQERELTQLREKLQEGRDASRSLNQHLQAL) are a coiled coil. 5 consecutive Olduvai domains span residues 221–313 (ENDD…CIIP), 314–402 (ENES…ATSP), 405–460 (SREL…LDLD), 461–552 (RMKK…PPCP), and 555–633 (NEVL…IFPH). The span at 316–326 (ESDHEQEEEKG) shows a compositional bias: basic and acidic residues. The tract at residues 316 to 370 (ESDHEQEEEKGPVSPRNLQESEEEEAPQESWDEGDWTLSIPPDMSASYQSDRSTF) is disordered. Residues 335–350 (ESEEEEAPQESWDEGD) are compositionally biased toward acidic residues. The tract at residues 463-484 (KKDQEEEEDQGPPCPRLSRELP) is disordered.

This sequence belongs to the NBPF family. As to expression, expressed in testis and fetal heart, as well as in non small cell lung carcinoma and neuroblastoma cell line.

It localises to the cytoplasm. The sequence is that of NBPF family member NBPF3 from Homo sapiens (Human).